We begin with the raw amino-acid sequence, 466 residues long: Neuropeptide Y receptor type 5 (466 aa).

At 1–63 the chain is on the extracellular side; sequence MEVKLEEHFN…YRGSVDDLQY (63 aa). N-linked (GlcNAc...) asparagine glycans are attached at residues Asn10, Asn17, Asn38, and Asn39. The helical transmembrane segment at 64–84 threads the bilayer; sequence FLIGLYTFVSLLGFMGNLLIL. At 85-98 the chain is on the cytoplasmic side; that stretch reads MAVMKKRNQKTTVN. Residues 99 to 119 traverse the membrane as a helical segment; the sequence is FLIGNLAFSDILVVLFCSPFT. Residues 120–138 are Extracellular-facing; that stretch reads LTSVLLDQWMFGKAMCHIM. Cysteines 135 and 219 form a disulfide. The chain crosses the membrane as a helical span at residues 139-159; sequence PFLQCVSVLVSTLILISIAIV. The Cytoplasmic segment spans residues 160–177; that stretch reads RYHMIKHPISNNLTANHG. The helical transmembrane segment at 178-198 threads the bilayer; that stretch reads YFLIATVWTLGFAICSPLPVF. Over 199–229 the chain is Extracellular; that stretch reads HSLVELKETFGSALLSSKYLCVESWPSDSYR. The helical transmembrane segment at 230–250 threads the bilayer; it reads IAFTISLLLVQYILPLVCLTV. Topologically, residues 251–389 are cytoplasmic; the sequence is SHTSVCRSIS…KKRSRSVFYR (139 aa). A disordered region spans residues 323-346; that stretch reads GPSQEKHLTVPENPGSVRSQLSPS. A helical transmembrane segment spans residues 390–410; sequence LTILILVFAVSWMPLHVFHVV. Residues 411–427 are Extracellular-facing; it reads TDFNDNLISNRHFKLVY. The helical transmembrane segment at 428 to 448 threads the bilayer; it reads CICHLLGMMSCCLNPILYGFL. The Cytoplasmic segment spans residues 449–466; sequence NNGIKADLRALIHCLHMS. The S-palmitoyl cysteine moiety is linked to residue Cys462.

The protein belongs to the G-protein coupled receptor 1 family.

The protein localises to the cell membrane. In terms of biological role, receptor for neuropeptide Y and peptide YY. The activity of this receptor is mediated by G proteins that inhibit adenylate cyclase activity. Seems to be associated with food intake. Could be involved in feeding disorders. This is Neuropeptide Y receptor type 5 (Npy5r) from Mus musculus (Mouse).